The sequence spans 334 residues: Large ribosomal subunit protein uL3 (334 aa).

A compositionally biased stretch (basic residues) spans 1-10; that stretch reads MGMKKSRPRR. Residues 1-20 form a disordered region; that stretch reads MGMKKSRPRRGSLAFSPRKR.

Belongs to the universal ribosomal protein uL3 family. In terms of assembly, part of the 50S ribosomal subunit. Forms a cluster with proteins L14 and L24e.

Its function is as follows. One of the primary rRNA binding proteins, it binds directly near the 3'-end of the 23S rRNA, where it nucleates assembly of the 50S subunit. In Methanococcus maripaludis (strain C7 / ATCC BAA-1331), this protein is Large ribosomal subunit protein uL3.